The sequence spans 575 residues: Urease subunit alpha (575 aa).

The region spanning 138 to 575 (GAVDCHVHLI…LPMAQRYFLF (438 aa)) is the Urease domain. His143, His145, and Lys226 together coordinate Ni(2+). Lys226 bears the N6-carboxylysine mark. His228 is a binding site for substrate. 2 residues coordinate Ni(2+): His255 and His281. His329 acts as the Proton donor in catalysis. Residue Asp369 participates in Ni(2+) binding.

Belongs to the metallo-dependent hydrolases superfamily. Urease alpha subunit family. As to quaternary structure, heterotrimer of UreA (gamma), UreB (beta) and UreC (alpha) subunits. Three heterotrimers associate to form the active enzyme. Ni cation serves as cofactor. Post-translationally, carboxylation allows a single lysine to coordinate two nickel ions.

The protein resides in the cytoplasm. The catalysed reaction is urea + 2 H2O + H(+) = hydrogencarbonate + 2 NH4(+). It functions in the pathway nitrogen metabolism; urea degradation; CO(2) and NH(3) from urea (urease route): step 1/1. The protein is Urease subunit alpha of Frankia alni (strain DSM 45986 / CECT 9034 / ACN14a).